Here is a 226-residue protein sequence, read N- to C-terminus: Enolase-phosphatase E1 (226 aa).

This sequence belongs to the HAD-like hydrolase superfamily. MasA/MtnC family. As to quaternary structure, monomer. It depends on Mg(2+) as a cofactor.

The catalysed reaction is 5-methylsulfanyl-2,3-dioxopentyl phosphate + H2O = 1,2-dihydroxy-5-(methylsulfanyl)pent-1-en-3-one + phosphate. Its pathway is amino-acid biosynthesis; L-methionine biosynthesis via salvage pathway; L-methionine from S-methyl-5-thio-alpha-D-ribose 1-phosphate: step 3/6. It participates in amino-acid biosynthesis; L-methionine biosynthesis via salvage pathway; L-methionine from S-methyl-5-thio-alpha-D-ribose 1-phosphate: step 4/6. Functionally, bifunctional enzyme that catalyzes the enolization of 2,3-diketo-5-methylthiopentyl-1-phosphate (DK-MTP-1-P) into the intermediate 2-hydroxy-3-keto-5-methylthiopentenyl-1-phosphate (HK-MTPenyl-1-P), which is then dephosphorylated to form the acireductone 1,2-dihydroxy-3-keto-5-methylthiopentene (DHK-MTPene). This is Enolase-phosphatase E1 from Shewanella pealeana (strain ATCC 700345 / ANG-SQ1).